The following is a 394-amino-acid chain: MTREVVVVSGVRTAIGTFGGSLKDVAPAELGALVVREALARAQVSGDDVGHVVFGNVIQTEPRDMYLGRVAAVNGGVTINAPALTVNRLCGSGLQAIVSAAQTILLGDTDVAIGGGAESMSRAPYLAPAARWGARMGDAGLVDMMLGALHDPFHRIHMGVTAENVAKEYDISRAQQDEAALESHRRASAAIKAGYFKDQIVPVVSKGRKGDVTFDTDEHVRHDATIDDMTKLRPVFVKENGTVTAGNASGLNDAAAAVVMMERAEAERRGLKPLARLVSYGHAGVDPKAMGIGPVPATKIALERAGLQVSDLDVIEANEAFAAQACAVTKALGLDPAKVNPNGSGISLGHPIGATGALITVKALHELNRVQGRYALVTMCIGGGQGIAAIFERI.

The active-site Acyl-thioester intermediate is the Cys-90. Residues His-350 and Cys-380 each act as proton acceptor in the active site.

Belongs to the thiolase-like superfamily. Thiolase family.

It catalyses the reaction an acyl-CoA + acetyl-CoA = a 3-oxoacyl-CoA + CoA. It carries out the reaction 2 acetyl-CoA = acetoacetyl-CoA + CoA. Its function is as follows. Required for efficient production of poly(beta-hydroxybutyrate-co-beta-hydroxyvalerate) (PHBV). Catalyzes the condensation of acetyl-CoA and propionyl-CoA to form beta-ketovaleryl-CoA, and the condensation of two acetyl-CoA molecules to form acetoacetyl-CoA. This is Beta-ketothiolase BktB (bktB) from Cupriavidus necator (strain ATCC 17699 / DSM 428 / KCTC 22496 / NCIMB 10442 / H16 / Stanier 337) (Ralstonia eutropha).